The primary structure comprises 482 residues: MKKSIETPLLLNTKQSQDEDKEKIRWEKMKKVASMAAPMVAVNMSQYLLQATSTMIVGHRSELALAGIALGSSFANVTGFGVLFGLSGSLETLCGQAYGAKQYHKLGSYTFTSIVFLLIISVPISILWMFMNQILLLLHQDPQIAELAGVYCLWLVPALFGYSVLESLVRYFQSQSLIYPMVLSSLAALSFHVPLCWLMVHKFDFGAKGAAASIGISYWLNAVFLWVYMKRSSRCVETRIYMSKDVFVHTNIFFQFAIPSAMMCCLEWLAFEVITLLSGLLPNSKLETSVISICLTTSSLHYNLVNGIGDAASTNVANELGAGNPRGARDSAAAAIIIAAVESVIVSSSLFLSRSVWPYAYSNVEEVISYVTDITPILCISILMDSFLTVLSGIVRGTGWQKIGAYVNITSYYVIGIPVGLLLCFHLHFNGKGLWAGLVTGSTLQTLILFLVIGFTNWSKEAIKARERIGDEKVWRHDSLLN.

The next 12 membrane-spanning stretches (helical) occupy residues 32–49 (VASMAAPMVAVNMSQYLL), 64–84 (ALAGIALGSSFANVTGFGVLF), 111–131 (FTSIVFLLIISVPISILWMFM), 144–164 (IAELAGVYCLWLVPALFGYSV), 180–200 (PMVLSSLAALSFHVPLCWLMV), 209–229 (GAAASIGISYWLNAVFLWVYM), 261–281 (AMMCCLEWLAFEVITLLSGLL), 289–309 (SVISICLTTSSLHYNLVNGIG), 332–352 (AAAAIIIAAVESVIVSSSLFL), 374–394 (ITPILCISILMDSFLTVLSGI), 403–423 (IGAYVNITSYYVIGIPVGLLL), and 435–455 (WAGLVTGSTLQTLILFLVIGF).

The protein belongs to the multi antimicrobial extrusion (MATE) (TC 2.A.66.1) family.

It is found in the membrane. The polypeptide is Protein DETOXIFICATION 9 (Arabidopsis thaliana (Mouse-ear cress)).